We begin with the raw amino-acid sequence, 287 residues long: Glycine--tRNA ligase alpha subunit (287 aa).

It belongs to the class-II aminoacyl-tRNA synthetase family. Tetramer of two alpha and two beta subunits.

The protein resides in the cytoplasm. It catalyses the reaction tRNA(Gly) + glycine + ATP = glycyl-tRNA(Gly) + AMP + diphosphate. This chain is Glycine--tRNA ligase alpha subunit, found in Campylobacter jejuni subsp. jejuni serotype O:6 (strain 81116 / NCTC 11828).